The primary structure comprises 92 residues: Small ribosomal subunit protein bS21 (92 aa).

The interval 37–92 is disordered; it reads QREGTFREMKRRNHYEKPSEKKARQKAEAIRRARKLARKRAQREGLIAKRGGTTRR. A compositionally biased stretch (basic and acidic residues) spans 51–67; the sequence is YEKPSEKKARQKAEAIR. The segment covering 68–77 has biased composition (basic residues); that stretch reads RARKLARKRA.

Belongs to the bacterial ribosomal protein bS21 family.

The protein is Small ribosomal subunit protein bS21 of Maricaulis maris (strain MCS10) (Caulobacter maris).